A 303-amino-acid chain; its full sequence is Recombination-associated protein RdgC (303 aa).

It belongs to the RdgC family.

Its subcellular location is the cytoplasm. It localises to the nucleoid. May be involved in recombination. The chain is Recombination-associated protein RdgC from Serratia proteamaculans (strain 568).